We begin with the raw amino-acid sequence, 32 residues long: Protamine-1 (32 aa).

The interval 1-32 (PRRRRASSGRPVRRRRRPKMSRRRRRGGRRRR) is disordered.

Testis.

The protein localises to the nucleus. It is found in the chromosome. Functionally, protamines substitute for histones in the chromatin of sperm during the haploid phase of spermatogenesis. They compact sperm DNA into a highly condensed, stable and inactive complex. The protein is Protamine-1 of Esox lucius (Northern pike).